The primary structure comprises 584 residues: Arginine--tRNA ligase (584 aa).

The 'HIGH' region signature appears at 126 to 136 (PNIAKEMHVGH).

Belongs to the class-I aminoacyl-tRNA synthetase family. As to quaternary structure, monomer.

Its subcellular location is the cytoplasm. The catalysed reaction is tRNA(Arg) + L-arginine + ATP = L-arginyl-tRNA(Arg) + AMP + diphosphate. This Nostoc punctiforme (strain ATCC 29133 / PCC 73102) protein is Arginine--tRNA ligase.